The sequence spans 308 residues: D-alanine--D-alanine ligase (308 aa).

An ATP-grasp domain is found at 102 to 302 (KKVAAAAGIP…FGDLVSWMVE (201 aa)). ATP is bound at residue 128–183 (PLQPPYVVKPVREGSSFGVVIVKEDQSHPPQILTSSEWPFGNQVMVERYIHGRELT). Mg(2+) is bound by residues D252, E269, and N271.

Belongs to the D-alanine--D-alanine ligase family. Requires Mg(2+) as cofactor. Mn(2+) is required as a cofactor.

The protein localises to the cytoplasm. The catalysed reaction is 2 D-alanine + ATP = D-alanyl-D-alanine + ADP + phosphate + H(+). It functions in the pathway cell wall biogenesis; peptidoglycan biosynthesis. In terms of biological role, cell wall formation. The polypeptide is D-alanine--D-alanine ligase (Agrobacterium fabrum (strain C58 / ATCC 33970) (Agrobacterium tumefaciens (strain C58))).